A 776-amino-acid polypeptide reads, in one-letter code: Semaphorin-4F (776 aa).

The first 39 residues, 1 to 39, serve as a signal peptide directing secretion; sequence MLARAERPRPGPRPPPVFPFPPPLSLLLLLAILSAPVCG. The Extracellular segment spans residues 40 to 665; it reads RVPRSVPRTS…GPSNRAHTVV (626 aa). In terms of domain architecture, Sema spans 47 to 515; it reads RTSLPISEAD…SHTEVTQVNT (469 aa). N-linked (GlcNAc...) asparagine glycosylation is present at Asn-69. A disulfide bridge connects residues Cys-117 and Cys-127. Residue Asn-138 is glycosylated (N-linked (GlcNAc...) asparagine). 3 disulfides stabilise this stretch: Cys-145–Cys-154, Cys-278–Cys-389, and Cys-302–Cys-348. Residue Asn-514 is glycosylated (N-linked (GlcNAc...) asparagine). The region spanning 517–568 is the PSI domain; the sequence is NCGRLQSCSECILAQDPVCAWSFRLDACVAHAGEHRGMVQDIESADVSSLCP. Cystine bridges form between Cys-518–Cys-535, Cys-527–Cys-544, and Cys-592–Cys-633. In terms of domain architecture, Ig-like C2-type spans 585 to 640; sequence VGHVVLPCSPSSAWASCVWHQPSGVTALTPRRDGLEVVVTPGAMGAYACECQEGGA. The helical transmembrane segment at 666 to 686 threads the bilayer; that stretch reads GAGLVGFLLGVLAASLTLLLI. At 687-776 the chain is on the cytoplasmic side; the sequence is GRRQQRRRQR…PLATCDETSI (90 aa). The disordered stretch occupies residues 702-741; the sequence is DKVGLDLGAPPSGTTSYSQDPPSPSPEDERLPLALGKRGS. Ser-724 and Ser-726 each carry phosphoserine. A PDZ-binding motif is present at residues 774–776; that stretch reads TSI.

Belongs to the semaphorin family. Interacts (via PDZ-binding motif) with DLG4/SAP90 (via PDZ domain 2); this interaction may promote translocation of DLG4/SAP90 to the membrane. In terms of tissue distribution, expressed at low levels in the developing embryo. Expressed at high levels in the lung and adult central nervous system, including the dorsal root ganglia.

The protein resides in the cell membrane. It is found in the postsynaptic density. Its subcellular location is the perikaryon. The protein localises to the cell projection. It localises to the dendrite. Functionally, probable cell surface receptor that regulates oligodendroglial precursor cell migration. Might also regulate differentiation of oligodendroglial precursor cells. Has growth cone collapse activity against retinal ganglion-cell axons. The protein is Semaphorin-4F (Sema4f) of Rattus norvegicus (Rat).